A 62-amino-acid polypeptide reads, in one-letter code: Large ribosomal subunit protein bL28 (62 aa).

The protein belongs to the bacterial ribosomal protein bL28 family.

The polypeptide is Large ribosomal subunit protein bL28 (Streptococcus thermophilus (strain CNRZ 1066)).